Consider the following 98-residue polypeptide: MTKSELIERIVTHQGLLSSKDVELAIKTMLEQMSQCLATGDRIEIRGFGSFSLHYRAPRVGRNPKTGQSVSLDGKFVPHFKPGKELRDRVNEEEEGEL.

The protein belongs to the bacterial histone-like protein family. In terms of assembly, heterodimer of an alpha and a beta chain.

In terms of biological role, this protein is one of the two subunits of integration host factor, a specific DNA-binding protein that functions in genetic recombination as well as in transcriptional and translational control. The protein is Integration host factor subunit beta of Pseudomonas fluorescens (strain Pf0-1).